Reading from the N-terminus, the 214-residue chain is YINYKNMSHQHMLTLFNLLPVGSNISIWWNFGSMLLTCLMIQIATGFFLAIHYTANINLAFSSIIHISRDVPYGWIMQNTHAIGASLFFICIYIHIARGIYYGSYLNKEVWLSGTTLLIILMATAFFGYVLPWGQMSFWAATVITNLLTAIPYLGTTLTTWLWGGYAINDPTLTRFFALHFILPFAIISMSSIHILLLHNEGSNNPLGTNSDID.

The next 4 membrane-spanning stretches (helical) occupy residues 31–51 (FGSMLLTCLMIQIATGFFLAI), 75–96 (WIMQNTHAIGASLFFICIYIHI), 111–131 (WLSGTTLLIILMATAFFGYVL), and 176–196 (FFALHFILPFAIISMSSIHIL). Heme b contacts are provided by His81 and His95. Heme b-binding residues include His180 and His194. His199 serves as a coordination point for a ubiquinone.

This sequence belongs to the cytochrome b family. The cytochrome bc1 complex contains 3 respiratory subunits (MT-CYB, CYC1 and UQCRFS1), 2 core proteins (UQCRC1 and UQCRC2) and probably 6 low-molecular weight proteins. Requires heme b as cofactor.

Its subcellular location is the mitochondrion inner membrane. Functionally, component of the ubiquinol-cytochrome c reductase complex (complex III or cytochrome b-c1 complex) that is part of the mitochondrial respiratory chain. The b-c1 complex mediates electron transfer from ubiquinol to cytochrome c. Contributes to the generation of a proton gradient across the mitochondrial membrane that is then used for ATP synthesis. The chain is Cytochrome b (MT-CYB) from Agkistrodon contortrix contortrix (Southern copperhead).